We begin with the raw amino-acid sequence, 319 residues long: Acetyl esterase (319 aa).

The Involved in the stabilization of the negatively charged intermediate by the formation of the oxyanion hole signature appears at 91–93 (HGG). Active-site residues include Ser-165, Asp-262, and His-292.

The protein belongs to the 'GDXG' lipolytic enzyme family. Homodimer. Interacts with MalT and MelA.

The protein resides in the cytoplasm. Functionally, displays esterase activity towards short chain fatty esters (acyl chain length of up to 8 carbons). Able to hydrolyze triacetylglycerol (triacetin) and tributyrylglycerol (tributyrin), but not trioleylglycerol (triolein) or cholesterol oleate. Negatively regulates MalT activity by antagonizing maltotriose binding. Inhibits MelA galactosidase activity. The polypeptide is Acetyl esterase (Escherichia coli O81 (strain ED1a)).